The sequence spans 181 residues: Probable nicotinate-nucleotide adenylyltransferase (181 aa).

It belongs to the NadD family.

The catalysed reaction is nicotinate beta-D-ribonucleotide + ATP + H(+) = deamido-NAD(+) + diphosphate. It participates in cofactor biosynthesis; NAD(+) biosynthesis; deamido-NAD(+) from nicotinate D-ribonucleotide: step 1/1. Its function is as follows. Catalyzes the reversible adenylation of nicotinate mononucleotide (NaMN) to nicotinic acid adenine dinucleotide (NaAD). The sequence is that of Probable nicotinate-nucleotide adenylyltransferase from Campylobacter fetus subsp. fetus (strain 82-40).